The sequence spans 2492 residues: MGSQISEKYYAREPIAIVGTSCRFPGGASSPSKLWELLDNPRDVVQKIPPRRFSTEAFYNADSQHHGVSPSDLIKGLRLTLQWSTNVKHAYLLDDDPRGFDRDFFAINPKEAEAMDPQQRILLETVYESVESAGYSIEQLRGSSTAVFVGCMSFDYQFAAIRGIDSTLPQYHATGAAMSILANRVSYFYDWKGPSVAIDTACSSSLVALHQAVSALRSGDAKLAVAAGSNLILGPEPFISESKLNMLSPNGRSYMWDASADGYTRGEGFSVLLLKTLTKALADSDHIECVIRETGVNSDGKTPGITMPSSNAQAQLIRDTYAKCGLDPNRESDRPQFFEAHGTGTQAGDPIEARAIQEVFFPDHTQPTDSKLLVGSVKTVIGHTEGTAGLAGVLKATLAIQHSQIPANLHFNELNPKIRPYYDNLRIPTETTPWPTLSPGAPRRVSVNSFGFGGTNAHAIVESWDGPYVRERSPAPNAIGAGPFVLSANSSQALAANAGALAEYLKEHPTTNLGQLGYTLFKRTNLPFRAAFSGSSVECLVEKLQAGKESLKSNSRITTLPESLPPRVLGVFTGQGAQWAKMGEGLYQTSMVFRNSVEQMQHSLDSLPESDRPNWTLAEQLHAPKETSRVGQATVSQPLCTAIQVALVDVLHVVGVELSAVVGHSSGEIGAAYAAGYLSAGDAIRIAYYRGFHSHLAQGPGGKRGSMMAVGLSYDQALSFCNELSGGITVAASNSYTSCTLAGDAEVIEEAKSRLEENGTFARVLAVDTAYHSHHMKPCATPYLESLKQCDIQVQKPKKGCAWYSSVWGSDGSSRSFNTEGELLQGQYWIENLTHPVLFSQALARALNEDQCFDCALEVGPHPALKGPSLEIIKTLTGVSLPYSGVLKRGEGAAEAFADALGLLWKSFPSSRPTITFNGICRAFSAVKPSSMTILKNLPNYSWDHATLFWKESRASRNFRTPKHAPHELLGRSVSHGEHSRREVHWRQVMRLRELPWLRGHKIQGEILFPASGYLSMAYEAAIRLVDEQQSVRIVEMQDMDIVRAMRLEDDTSGLEVLFTIHVTSQSQSCINANVACYSGAVDAPQPLDAHQTELTAHFNGRIRLWLEQPSAYTLPLRSEPLLPMSELNMAQVYSSLSKEGFDYSGDFQAKSMLRRLGHTVVTLSSPSPVSWTHTLTHPAPIDTAVQGLLTAFSFPGDGRIGTTYLPTRIESVRISTAPSESDAPILKADSVVTLTDVTTITGDVDIFDAASCHTQVQMRGVQMTAIGKPPDRWLYAGKIWARDIAYGLEPGSGTQFSDDDRLLYEQLVRTAYFYLRQLRSKIRPPELMLMGKFRRHMMRWVTEHLFPQIESGQHPDIRTEWKDDTLDTVQRWRNSRPADNNDMNLLHAMGQSLIPIVRGTVPPLKVLVQDGMLDRLYFEGIGFRDGNVDLGAIVKQLGHEHPRMRIVEVGAGTGGTTRTVLDALETRYAAYTYTDISTGFFENARSVFSQHASKLTFKTLNIENDPVDQGFTEGSFDMLIASNCLHATHSLENTLRQCRKLLRPGGRLVLLEITRDFLPIQMIMATLPGWFLGMDEGRLWAPTVTLDRWDEILKTTGFSGVDISSTPSYCSVIVSQAVDETVSVLRNPLASPDGVPSLSEIVIIGGVGSGLAPQIQSLLTSTIPVETRIASSLEDVEVNRGSTVLCLGDLDSPSFCNMDQTRFEGLQKVFQAANAVLWVTSGATSGTNPEANITVGMGSTLMAERGDLKLQFLDVDDPTTIDPSMLARMLLRLAILDQSKSDETLWTIEPELTLKNGALYIPRVQPLDVINRQSTARYRQVIEDIDLNSASPVVDLVKYQDSWKLQSSPIDSTRVNGIEVRVTASSLHTLSCEGGKPEYIFMGRELLSGDNIIGLSASNSSIANITDDQVLHRWQDSQTGAINVAQLSDLLAKALAENLLRNTTGPVWIHGAPSNLSEAIGEVTKEEGLDVFQTTSDLAQVAAFNFIHPYATRQDIQDKQPSGLRNFVDLEHSELRNEALHTSVAASLPVSAISHRCMMDLTHGINRSYLAKLAARCLTEDRKSSEDHSQVILIDRIASESSKDLGPTTVIDWHAANTVTALVRPLEHRDLFFPSKSYLLFGMTGDLGISVCKWMVDNGARNVVLASRNPNVPSSVLNFMSRKSATVRALSVDITDMESLCTAREDIESTMPPIGGVMNAAMVLRDRLFHDLTWEDFAAVLGPKVQGTQNINNAFGQKESALDFFVCFSSATSIIGTVGQSAYAAANHFMVSLVQQRKRRGLAGSIVHISVLTGLGYIFRRGSEHTAVIDKALLPRLERQAETDLHEMLAEAIVCGRPGSSQPPELITGIKAVFQGEWRDDPRLLGYLGQQQLGNDSAKDQAAGMVSVETQLDAADDPAECLPILEKRFAQALGNMLEIDPEKVDGSMPVASLGIDSLVAIRIREWFMKELGVEVPVLKIMSVGHSLSRVCDDVLVDWRRVKKEGELEDKK.

Residues 12–463 enclose the Ketosynthase family 3 (KS3) domain; it reads REPIAIVGTS…GTNAHAIVES (452 aa). Residues cysteine 202, histidine 341, and histidine 383 each act as for beta-ketoacyl synthase activity in the active site. The malonyl-CoA:ACP transacylase (MAT) domain stretch occupies residues 571–866; the sequence is VFTGQGAQWA…LEVGPHPALK (296 aa). Residues 967 to 1110 are N-terminal hotdog fold; sequence HELLGRSVSH…GRIRLWLEQP (144 aa). A dehydratase (DH) domain region spans residues 967–1270; the sequence is HELLGRSVSH…GVQMTAIGKP (304 aa). In terms of domain architecture, PKS/mFAS DH spans 967 to 1273; sequence HELLGRSVSH…MTAIGKPPDR (307 aa). The active-site Proton acceptor; for dehydratase activity is histidine 1001. The C-terminal hotdog fold stretch occupies residues 1125–1273; the sequence is MSELNMAQVY…MTAIGKPPDR (149 aa). The Proton donor; for dehydratase activity role is filled by aspartate 1183. The interval 1431-1604 is C-methyltransferase (CMeT) domain; it reads LGAIVKQLGH…KTTGFSGVDI (174 aa). Residues 2118-2293 form a ketoreductase (KR) domain region; it reads SYLLFGMTGD…AGSIVHISVL (176 aa). A Carrier domain is found at 2404–2479; that stretch reads PILEKRFAQA…RVCDDVLVDW (76 aa). Residue serine 2438 is modified to O-(pantetheine 4'-phosphoryl)serine.

Highly reducing polyketide synthase; part of the gene cluster that mediates the biosynthesis of fujikurins A-D, secondary metabolites playing a role during rice infection. The polyketide synthase PKS19 acts with the trans-enoyl reductase FFUJ_12240 and the polyketide transferase FFUJ_12241 to produce fujikurins, however, the biosynthesis pathway has not been identified yet. The sequence is that of Polyketide synthase 19 from Gibberella fujikuroi (strain CBS 195.34 / IMI 58289 / NRRL A-6831) (Bakanae and foot rot disease fungus).